The chain runs to 240 residues: UDP-2,3-diacylglucosamine hydrolase (240 aa).

Asp8, His10, Asp41, Asn79, and His114 together coordinate Mn(2+). 79–80 (NR) is a binding site for substrate. Positions 122, 160, 164, 167, and 195 each coordinate substrate. Mn(2+) is bound by residues His195 and His197.

The protein belongs to the LpxH family. It depends on Mn(2+) as a cofactor.

Its subcellular location is the cell inner membrane. The enzyme catalyses UDP-2-N,3-O-bis[(3R)-3-hydroxytetradecanoyl]-alpha-D-glucosamine + H2O = 2-N,3-O-bis[(3R)-3-hydroxytetradecanoyl]-alpha-D-glucosaminyl 1-phosphate + UMP + 2 H(+). Its pathway is glycolipid biosynthesis; lipid IV(A) biosynthesis; lipid IV(A) from (3R)-3-hydroxytetradecanoyl-[acyl-carrier-protein] and UDP-N-acetyl-alpha-D-glucosamine: step 4/6. Functionally, hydrolyzes the pyrophosphate bond of UDP-2,3-diacylglucosamine to yield 2,3-diacylglucosamine 1-phosphate (lipid X) and UMP by catalyzing the attack of water at the alpha-P atom. Involved in the biosynthesis of lipid A, a phosphorylated glycolipid that anchors the lipopolysaccharide to the outer membrane of the cell. In Salmonella agona (strain SL483), this protein is UDP-2,3-diacylglucosamine hydrolase.